The chain runs to 211 residues: MPEHTSVEMEPPIAASLFGVRMPVAREFASQLGSRGEELGLIGPLEPPRLWSRHIINSVLVAPLLNPGVVGDIGTGAGLPGLVLAIARPDVDFVLIEPMERRVAWLEEQVAHLGLDNVQVRRARAEDVANEISLDQVTARAVSAFSKLIPLTVPLVKTGGELVLMKGANAEREVEAASRAIRKHHLEDVEVITLGAGQVDEVTRVIRARVA.

Residues Gly-74, Leu-79, 125 to 126, and Arg-140 each bind S-adenosyl-L-methionine; that span reads AE.

Belongs to the methyltransferase superfamily. RNA methyltransferase RsmG family.

It is found in the cytoplasm. In terms of biological role, specifically methylates the N7 position of guanine in position 518 of 16S rRNA. This chain is Ribosomal RNA small subunit methyltransferase G, found in Clavibacter sepedonicus (Clavibacter michiganensis subsp. sepedonicus).